Here is a 479-residue protein sequence, read N- to C-terminus: Sulfate adenylyltransferase subunit 1 (479 aa).

Residues 25–239 enclose the tr-type G domain; the sequence is KSLLRFLTCG…EVLETVDIQR (215 aa). Residues 34–41 form a G1 region; the sequence is GSVDDGKS. GTP is bound at residue 34–41; sequence GSVDDGKS. Positions 92 to 96 are G2; the sequence is GITID. The segment at 113 to 116 is G3; the sequence is DTPG. Residues 113 to 117 and 168 to 171 each bind GTP; these read DTPGH and NKMD. The interval 168–171 is G4; it reads NKMD. Positions 206–208 are G5; that stretch reads SAL.

This sequence belongs to the TRAFAC class translation factor GTPase superfamily. Classic translation factor GTPase family. CysN/NodQ subfamily. Heterodimer composed of CysD, the smaller subunit, and CysN.

It catalyses the reaction sulfate + ATP + H(+) = adenosine 5'-phosphosulfate + diphosphate. The protein operates within sulfur metabolism; hydrogen sulfide biosynthesis; sulfite from sulfate: step 1/3. Functionally, with CysD forms the ATP sulfurylase (ATPS) that catalyzes the adenylation of sulfate producing adenosine 5'-phosphosulfate (APS) and diphosphate, the first enzymatic step in sulfur assimilation pathway. APS synthesis involves the formation of a high-energy phosphoric-sulfuric acid anhydride bond driven by GTP hydrolysis by CysN coupled to ATP hydrolysis by CysD. The chain is Sulfate adenylyltransferase subunit 1 from Salmonella typhi.